Consider the following 140-residue polypeptide: Profilin-1 (140 aa).

Alanine 2 bears the N-acetylalanine mark. Serine 28 is subject to Phosphoserine. Lysine 54 participates in a covalent cross-link: Glycyl lysine isopeptide (Lys-Gly) (interchain with G-Cter in SUMO2); alternate. Residue lysine 54 forms a Glycyl lysine isopeptide (Lys-Gly) (interchain with G-Cter in ubiquitin); alternate linkage. Serine 57 carries the post-translational modification Phosphoserine. Lysine 108 is subject to N6-acetyllysine. Tyrosine 129 bears the Phosphotyrosine mark. The residue at position 138 (serine 138) is a Phosphoserine; by ROCK1.

The protein belongs to the profilin family. In terms of assembly, found in a complex with XPO6, Ran, ACTB and PFN1. Interacts with ACTB. Interacts with VASP. Interacts with HTT. Interacts with SH3BGRL. Occurs in many kinds of cells as a complex with monomeric actin in a 1:1 ratio. Interacts with ACTMAP. In terms of processing, phosphorylation at Ser-138 reduces its affinity for G-actin and blocks its interaction with HTT, reducing its ability to inhibit androgen receptor (AR) and HTT aggregation.

It localises to the cytoplasm. The protein resides in the cytoskeleton. In terms of biological role, binds to actin and affects the structure of the cytoskeleton. At high concentrations, profilin prevents the polymerization of actin, whereas it enhances it at low concentrations. By binding to PIP2, it inhibits the formation of IP3 and DG. Inhibits androgen receptor (AR) and HTT aggregation and binding of G-actin is essential for its inhibition of AR. This is Profilin-1 (PFN1) from Bos taurus (Bovine).